The primary structure comprises 368 residues: Putative agmatine deiminase (368 aa).

The active-site Amidino-cysteine intermediate is C359.

The protein belongs to the agmatine deiminase family.

It catalyses the reaction agmatine + H2O = N-carbamoylputrescine + NH4(+). In Pectobacterium atrosepticum (strain SCRI 1043 / ATCC BAA-672) (Erwinia carotovora subsp. atroseptica), this protein is Putative agmatine deiminase.